A 304-amino-acid polypeptide reads, in one-letter code: Bacteriochlorophyll synthase 33 kDa chain (304 aa).

9 helical membrane passes run 26 to 46 (VTWFPPMWAYLCGAVSSNVPI), 51 to 71 (GVVVLGIVLAGPIVCGMSQAA), 94 to 114 (IPGLWGLYIAIAMSLLSLVVG), 117 to 137 (LGSWGFVATLLGVAAAWAYSV), 151 to 171 (GLVGLAYEGLPWITGAAVLLA), 178 to 198 (GFPIVMMATLYALGAHGIMTI), 227 to 247 (IACTVMGLAQALVITMLYLFS), 250 to 270 (YHATAVLVLLCGQFWAMSVWM), and 279 to 299 (WYNGTGVVMYVSGMMITAFAI).

The protein localises to the cell membrane. It participates in porphyrin-containing compound metabolism; bacteriochlorophyll biosynthesis (light-independent). Catalyzes the esterification of bacteriochlorophyllide a by geranylgeraniol-PPi. In Rhodobacter capsulatus (strain ATCC BAA-309 / NBRC 16581 / SB1003), this protein is Bacteriochlorophyll synthase 33 kDa chain (bchG).